The following is a 337-amino-acid chain: G-protein coupled receptor 26 (337 aa).

Over 1–10 (MNSWDAGLAG) the chain is Extracellular. The helical transmembrane segment at 11 to 31 (LLVGTIGVSLLSNGLVLLCLL) threads the bilayer. Over 32 to 47 (HSADIRRQAPALFTLN) the chain is Cytoplasmic. The chain crosses the membrane as a helical span at residues 48–68 (LTCGNLLCTVVNMPLTLAGVV). Residues 69–81 (AQRQPAGDRLCRL) lie on the Extracellular side of the membrane. Cys79 and Cys156 are oxidised to a cystine. Residues 82–102 (AAFLDTFLAANSMLSMAALSI) traverse the membrane as a helical segment. Residues 103–123 (DRWVAVVFPLSYRAKMRLRDA) are Cytoplasmic-facing. A helical transmembrane segment spans residues 124-144 (AFMVAYTWLHALTFPATALAL). The Extracellular portion of the chain corresponds to 145 to 168 (SWLGFHQLYASCTLCSRRPDERLR). The chain crosses the membrane as a helical span at residues 169 to 189 (FAVFTSAFHALSFLLSFIVLC). Residues 190–245 (FTYLKVLKVARFHCKRIDVITMQTLVLLVDIHPSVRERCLEEQKRRRQRATKKIST) are Cytoplasmic-facing. A helical membrane pass occupies residues 246–266 (FIGTFLVCFAPYVITRLVELF). At 267 to 276 (STAPIDSHWG) the chain is on the extracellular side. Residues 277 to 297 (VLSKCLAYSKAASDPFVYSLL) form a helical membrane-spanning segment. Residues 298–337 (RHQYRRSCKELLNRIFNRRSIHSVGLTGDSHSQNILPVSE) lie on the Cytoplasmic side of the membrane.

Belongs to the G-protein coupled receptor 1 family. Detected in extracts of several brain regions including striatum, pons, cerebellum and cortex. Not detected in numerous peripheral tissue extracts, except in testis. In the brain, detected in cortical structures including the anterior cingulate area, posterior cingulate and the frontoparietal, somatosensory and piriform cortices. Prominent also in the olfactory tubercle, the islands of Calleja, ventromedial and posterior nuclei of the hypothalamus, the medial septal nucleus, nucleus of the diagonal band and the ventral tegmental area. Localized also to hippocampal structures, with signals strongest over the CA2 and CA3 regions of Ammon's horn and less so over the dentate gyrus. Expressed in the caudate putamen only in its most caudal portion, with a decreasing gradient of signal from the dorsal to ventral aspect. Strong expression associated with a single pontine structure, the inferior olivary nucleus.

The protein localises to the cell membrane. Functionally, orphan receptor. Displays a significant level of constitutive activity. Its effect is mediated by G(s)-alpha protein that stimulate adenylate cyclase, resulting in an elevation of intracellular cAMP. The sequence is that of G-protein coupled receptor 26 (Gpr26) from Rattus norvegicus (Rat).